Here is a 114-residue protein sequence, read N- to C-terminus: Large ribosomal subunit protein P2 (114 aa).

Over residues 74-83 the composition is skewed to gly residues; it reads AAAAGGGGGD. Positions 74-114 are disordered; that stretch reads AAAAGGGGGDAPAAAAEEPKKEEKSEEESDEELGFSLFDDN. Positions 98-114 are enriched in acidic residues; that stretch reads SEEESDEELGFSLFDDN.

Belongs to the eukaryotic ribosomal protein P1/P2 family. P1 and P2 exist as dimers at the large ribosomal subunit. Post-translationally, phosphorylated.

Functionally, plays an important role in the elongation step of protein synthesis. This is Large ribosomal subunit protein P2 from Parthenium argentatum (Guayule rubber plant).